Reading from the N-terminus, the 659-residue chain is RNA-binding protein MIP6 (659 aa).

A compositionally biased stretch (polar residues) spans 1–27 (MPNSHGNVLNNISLNSKQNPRSISKSC). A disordered region spans residues 1–35 (MPNSHGNVLNNISLNSKQNPRSISKSCPNDKDARQ). RRM domains follow at residues 111–189 (NSLF…PSMK), 199–267 (TNVF…GNKI), and 313–389 (KTIL…PGKD).

In terms of assembly, interacts with MEX67.

Its subcellular location is the cytoplasm. This chain is RNA-binding protein MIP6 (MIP6), found in Saccharomyces cerevisiae (strain ATCC 204508 / S288c) (Baker's yeast).